A 257-amino-acid chain; its full sequence is Thiazole synthase (257 aa).

The Schiff-base intermediate with DXP role is filled by lysine 96. 1-deoxy-D-xylulose 5-phosphate is bound by residues glycine 157, 184 to 185 (AG), and 206 to 207 (NT).

This sequence belongs to the ThiG family. Homotetramer. Forms heterodimers with either ThiH or ThiS.

It is found in the cytoplasm. It carries out the reaction [ThiS sulfur-carrier protein]-C-terminal-Gly-aminoethanethioate + 2-iminoacetate + 1-deoxy-D-xylulose 5-phosphate = [ThiS sulfur-carrier protein]-C-terminal Gly-Gly + 2-[(2R,5Z)-2-carboxy-4-methylthiazol-5(2H)-ylidene]ethyl phosphate + 2 H2O + H(+). It participates in cofactor biosynthesis; thiamine diphosphate biosynthesis. Functionally, catalyzes the rearrangement of 1-deoxy-D-xylulose 5-phosphate (DXP) to produce the thiazole phosphate moiety of thiamine. Sulfur is provided by the thiocarboxylate moiety of the carrier protein ThiS. In vitro, sulfur can be provided by H(2)S. The polypeptide is Thiazole synthase (Allorhizobium ampelinum (strain ATCC BAA-846 / DSM 112012 / S4) (Agrobacterium vitis (strain S4))).